The primary structure comprises 242 residues: Uridylate kinase (242 aa).

17 to 20 serves as a coordination point for ATP; it reads KLSG. Position 59 (Gly59) interacts with UMP. Gly60 and Arg64 together coordinate ATP. Residues Asp79 and 140–147 each bind UMP; that span reads TGNPFFTT. Positions 167, 173, and 176 each coordinate ATP.

The protein belongs to the UMP kinase family. As to quaternary structure, homohexamer.

The protein resides in the cytoplasm. It carries out the reaction UMP + ATP = UDP + ADP. It participates in pyrimidine metabolism; CTP biosynthesis via de novo pathway; UDP from UMP (UMPK route): step 1/1. With respect to regulation, inhibited by UTP. Functionally, catalyzes the reversible phosphorylation of UMP to UDP. The polypeptide is Uridylate kinase (Marinobacter nauticus (strain ATCC 700491 / DSM 11845 / VT8) (Marinobacter aquaeolei)).